Consider the following 567-residue polypeptide: Urease subunit alpha 1 (567 aa).

The Urease domain occupies 128 to 567; that stretch reads GAVDTHVHYI…LPLAQLYHLF (440 aa). Residues His133, His135, and Lys216 each contribute to the Ni(2+) site. Residue Lys216 is modified to N6-carboxylysine. His218 lines the substrate pocket. The Ni(2+) site is built by His245 and His271. The active-site Proton donor is His319. Position 359 (Asp359) interacts with Ni(2+).

This sequence belongs to the metallo-dependent hydrolases superfamily. Urease alpha subunit family. As to quaternary structure, heterotrimer of UreA (gamma), UreB (beta) and UreC (alpha) subunits. Three heterotrimers associate to form the active enzyme. Ni cation is required as a cofactor. In terms of processing, carboxylation allows a single lysine to coordinate two nickel ions.

It is found in the cytoplasm. It carries out the reaction urea + 2 H2O + H(+) = hydrogencarbonate + 2 NH4(+). Its pathway is nitrogen metabolism; urea degradation; CO(2) and NH(3) from urea (urease route): step 1/1. In Psychrobacter cryohalolentis (strain ATCC BAA-1226 / DSM 17306 / VKM B-2378 / K5), this protein is Urease subunit alpha 1.